Here is a 599-residue protein sequence, read N- to C-terminus: Nucleoporin p58/p45 (599 aa).

A run of 5 repeats spans residues 7 to 8 (FG), 30 to 31 (FG), 44 to 45 (FG), 63 to 64 (FG), and 68 to 69 (FG). The tract at residues 7-579 (FGSGTLGSTT…VSNPASAGFG (573 aa)) is 14 X 2 AA repeats of F-G. A disordered region spans residues 213 to 247 (NEGLGGIDFSSSSDKKSDKTGTRPEDSKALKDENL). A compositionally biased stretch (basic and acidic residues) spans 225-246 (SDKKSDKTGTRPEDSKALKDEN). 2 coiled-coil regions span residues 256–276 (ENLQKFVKEQKQVQEEISRMS) and 314–381 (ETAQ…SHIT). Thr-331 carries the post-translational modification Phosphothreonine. 9 tandem repeats follow at residues 488–489 (FG), 492–493 (FG), 513–514 (FG), 519–520 (FG), 529–530 (FG), 531–532 (FG), 545–546 (FG), 568–569 (FG), and 578–579 (FG). Positions 579-599 (GTGGQLLQLKKPPAGNKRGKR) are disordered.

It belongs to the NUP58 family. In terms of assembly, component of the p62 complex, a complex at least composed of NUP62, NUP54, and NUP58. Interacts with NUTF2. Interacts with SRP1-alpha and Importin p97 proteins when they are together, but not with SRP1-alpha protein alone. O-glycosylated.

Its subcellular location is the nucleus. It localises to the nuclear pore complex. The protein localises to the nucleus membrane. Component of the nuclear pore complex, a complex required for the trafficking across the nuclear membrane. The sequence is that of Nucleoporin p58/p45 from Homo sapiens (Human).